We begin with the raw amino-acid sequence, 405 residues long: Imidazolonepropionase (405 aa).

The Fe(3+) site is built by H70 and H72. Residues H70 and H72 each contribute to the Zn(2+) site. 3 residues coordinate 4-imidazolone-5-propanoate: R79, Y142, and H175. Residue Y142 coordinates N-formimidoyl-L-glutamate. H240 lines the Fe(3+) pocket. H240 is a Zn(2+) binding site. Q243 serves as a coordination point for 4-imidazolone-5-propanoate. Fe(3+) is bound at residue D315. D315 is a Zn(2+) binding site. Positions 317 and 319 each coordinate N-formimidoyl-L-glutamate. T320 is a binding site for 4-imidazolone-5-propanoate.

This sequence belongs to the metallo-dependent hydrolases superfamily. HutI family. Zn(2+) is required as a cofactor. Fe(3+) serves as cofactor.

The protein resides in the cytoplasm. It catalyses the reaction 4-imidazolone-5-propanoate + H2O = N-formimidoyl-L-glutamate. Its pathway is amino-acid degradation; L-histidine degradation into L-glutamate; N-formimidoyl-L-glutamate from L-histidine: step 3/3. Catalyzes the hydrolytic cleavage of the carbon-nitrogen bond in imidazolone-5-propanoate to yield N-formimidoyl-L-glutamate. It is the third step in the universal histidine degradation pathway. This chain is Imidazolonepropionase, found in Ectopseudomonas mendocina (strain ymp) (Pseudomonas mendocina).